Reading from the N-terminus, the 820-residue chain is Nuclear pore complex protein Nup93 (820 aa).

The protein belongs to the nucleoporin interacting component (NIC) family.

It is found in the nucleus membrane. The protein resides in the nucleus. It localises to the nuclear pore complex. In terms of biological role, plays a role in the nuclear pore complex (NPC) assembly and/or maintenance. The chain is Nuclear pore complex protein Nup93 (nup93) from Xenopus laevis (African clawed frog).